Here is a 101-residue protein sequence, read N- to C-terminus: Small ribosomal subunit protein uS14 (101 aa).

It belongs to the universal ribosomal protein uS14 family. Part of the 30S ribosomal subunit. Contacts proteins S3 and S10.

Functionally, binds 16S rRNA, required for the assembly of 30S particles and may also be responsible for determining the conformation of the 16S rRNA at the A site. This chain is Small ribosomal subunit protein uS14, found in Polaromonas sp. (strain JS666 / ATCC BAA-500).